Reading from the N-terminus, the 45-residue chain is Thymosin beta-15A (45 aa).

Basic and acidic residues-rich tracts occupy residues 1-27 and 35-45; these read MSDKPDLSEVEKFDRSKLKKTNTEEKN and IQQEKECVQTS. The tract at residues 1–45 is disordered; the sequence is MSDKPDLSEVEKFDRSKLKKTNTEEKNTLPSKETIQQEKECVQTS.

The protein belongs to the thymosin beta family. In terms of tissue distribution, neuroblastoma-specific.

The protein localises to the cytoplasm. The protein resides in the cytoskeleton. Functionally, plays an important role in the organization of the cytoskeleton. Binds to and sequesters actin monomers (G actin) and therefore inhibits actin polymerization. This is Thymosin beta-15A (TMSB15A) from Homo sapiens (Human).